Consider the following 887-residue polypeptide: Lateral signaling target protein 2 homolog (887 aa).

Lysine 87 is covalently cross-linked (Glycyl lysine isopeptide (Lys-Gly) (interchain with G-Cter in ubiquitin)). Residues proline 308–proline 327 are disordered. Serine 334 carries the post-translational modification Phosphoserine. Disordered stretches follow at residues aspartate 354–glutamate 396 and alanine 412–alanine 474. The residue at position 516 (threonine 516) is a Phosphothreonine. At serine 586 the chain carries Phosphoserine; by MAP2K. The interval leucine 599–glutamate 714 is disordered. Over residues alanine 602–glutamate 612 the composition is skewed to basic and acidic residues. The span at threonine 638 to glycine 648 shows a compositional bias: polar residues. 2 stretches are compositionally biased toward low complexity: residues serine 681–serine 693 and alanine 700–alanine 711. The FYVE-type zinc-finger motif lies at aspartate 817–proline 879. Positions 823, 826, 839, 842, 847, 850, and 869 each coordinate Zn(2+). The residue at position 870 (threonine 870) is a Phosphothreonine; by MAP2K. Cysteine 872 is a Zn(2+) binding site.

This sequence belongs to the lst-2 family. As to quaternary structure, interacts with TRIM3. Post-translationally, monoubiquitination at Lys-87 prevents binding to phosphatidylinositol 3-phosphate (PI3P) and localization to early endosome membranes.

It is found in the cytoplasm. The protein resides in the cytosol. Its subcellular location is the early endosome membrane. Its function is as follows. Negative regulator of epidermal growth factor receptor (EGFR) signaling. Acts by promoting EGFR degradation in endosomes when not monoubiquitinated. The polypeptide is Lateral signaling target protein 2 homolog (ZFYVE28) (Homo sapiens (Human)).